Reading from the N-terminus, the 86-residue chain is Small ribosomal subunit protein uS15 (86 aa).

It belongs to the universal ribosomal protein uS15 family. As to quaternary structure, part of the 30S ribosomal subunit. Forms a bridge to the 50S subunit in the 70S ribosome, contacting the 23S rRNA.

Functionally, one of the primary rRNA binding proteins, it binds directly to 16S rRNA where it helps nucleate assembly of the platform of the 30S subunit by binding and bridging several RNA helices of the 16S rRNA. In terms of biological role, forms an intersubunit bridge (bridge B4) with the 23S rRNA of the 50S subunit in the ribosome. In Mycoplasma genitalium (strain ATCC 33530 / DSM 19775 / NCTC 10195 / G37) (Mycoplasmoides genitalium), this protein is Small ribosomal subunit protein uS15.